The primary structure comprises 713 residues: Topoisomerase subunit TopoM (713 aa).

The 464-residue stretch at 41–504 (IPSAYDGLKP…DATPVSRGDE (464 aa)) folds into the Topo IIA-type catalytic domain. Tyrosine 128 serves as the catalytic O-(5'-phospho-DNA)-tyrosine intermediate. Positions 694 to 713 (NRAKASIKGSGADVTPAPAE) are disordered.

It belongs to the type II topoisomerase GyrA/ParC subunit family. In terms of assembly, a complex of TopoN and TopoM, possibly a heterotetramer. Requires Mg(2+) as cofactor.

The catalysed reaction is ATP-dependent breakage, passage and rejoining of double-stranded DNA.. Its activity is regulated as follows. Inhibited by quinolone antibiotic ciprofloxacin and coumarin antibiotic novobiocin, but at much higher concentrations than is usual for DNA gyrase/topoisomerase. Catalyzes the relaxation of negatively supercoiled DNA in the presence of ATP or dATP but not other nucleotides. Individual subunits have no activity. Not able to negatively supercoil DNA, it can however introduce positive supercoils in DNA. Relaxes positive supercoils in an ATP-dependent manner. Catenates and decatenates DNA. Generates dsDNA breaks in the presence of the quinolone antibiotic ciprofloxacin, showing it is a topoisomerase. The polypeptide is Topoisomerase subunit TopoM (Mycolicibacterium smegmatis (strain ATCC 700084 / mc(2)155) (Mycobacterium smegmatis)).